The sequence spans 199 residues: NAD(P)H dehydrogenase (quinone) (199 aa).

The region spanning 4–190 is the Flavodoxin-like domain; the sequence is MLVLYYSAYG…DGARFQGRRV (187 aa). Residues 10–15 and 78–80 contribute to the FMN site; these read SAYGYM and TRY. Position 12 (tyrosine 12) interacts with NAD(+). Residue tryptophan 98 participates in substrate binding. FMN is bound by residues 113–119 and histidine 134; that span reads STATQHG. The interval 158–181 is disordered; it reads GAPYGMTTTADGDGSRQPSAQELD. Residues 163-177 are compositionally biased toward polar residues; it reads MTTTADGDGSRQPSA.

This sequence belongs to the WrbA family. It depends on FMN as a cofactor.

The catalysed reaction is a quinone + NADH + H(+) = a quinol + NAD(+). It catalyses the reaction a quinone + NADPH + H(+) = a quinol + NADP(+). The polypeptide is NAD(P)H dehydrogenase (quinone) (Brucella abortus (strain S19)).